We begin with the raw amino-acid sequence, 651 residues long: F-box only protein 43 (651 aa).

2 disordered regions span residues 14–42 (MTAG…LKGF) and 140–171 (LRRI…TSTL). Polar residues predominate over residues 27–36 (TSVSQDSGYS). Serine 33 is subject to Phosphoserine; by PLK1. Threonine 195 is subject to Phosphothreonine; by CaMK2. The region spanning 424–499 (SGCFELPEDS…QDKSAHQRRK (76 aa)) is the F-box domain. Residues 579 to 627 (ALKPCPRCQYPAKYQALKKRGTCSRKDCGFDFCSLCLCTFHGSKECGTG) form a ZBR-type zinc finger. Positions 583, 586, 601, 606, 611, 614, 619, and 624 each coordinate Zn(2+).

In terms of assembly, part of a SCF (SKP1-cullin-F-box) protein ligase complex. Interaction with SKP1 does not occur. Post-translationally, phosphorylated on Thr-195 by CaMK2 in response to calcium during egg activation, which promotes subsequent phosphorylation by PLK1, ubiquitination and protesomal degradation. In terms of processing, ubiquitinated by FBXW1 during egg activation, which promotes proteasomal degradation.

It functions in the pathway protein modification; protein ubiquitination. Its function is as follows. Required to prevent anaphase onset in cytostatic factor-arrested oocytes. Inhibits the anaphase-promoting complex/cyclosome (APC/C) ubiquitin ligase and prevents cyclin degradation. Probably recognizes and binds to some phosphorylated proteins and promotes their ubiquitination and degradation. The sequence is that of F-box only protein 43 (fbxo43) from Xenopus laevis (African clawed frog).